A 222-amino-acid polypeptide reads, in one-letter code: MIF4G domain-containing protein B (222 aa).

The 203-residue stretch at 3–205 (NSSKEDYKIQ…LEILEFRAGG (203 aa)) folds into the MIF4G domain.

Belongs to the MIF4GD family. As to quaternary structure, interacts with eif4g1, eif4g2 and slbp; probably tethered by SLBP to the 3'-end of mRNAs ending with the histone stem-loop, it also interacts with eif4g1 which is bound to their 5'-end.

It localises to the cytoplasm. Its subcellular location is the nucleus. Functions in replication-dependent translation of histone mRNAs which differ from other eukaryotic mRNAs in that they do not end with a poly-A tail but a stem-loop. May participate in circularizing those mRNAs specifically enhancing their translation. This is MIF4G domain-containing protein B (mif4gdb) from Danio rerio (Zebrafish).